Consider the following 171-residue polypeptide: 3-hydroxydecanoyl-[acyl-carrier-protein] dehydratase (171 aa).

The active site involves H70.

The protein belongs to the thioester dehydratase family. FabA subfamily. As to quaternary structure, homodimer.

The protein localises to the cytoplasm. The catalysed reaction is a (3R)-hydroxyacyl-[ACP] = a (2E)-enoyl-[ACP] + H2O. The enzyme catalyses (3R)-hydroxydecanoyl-[ACP] = (2E)-decenoyl-[ACP] + H2O. It carries out the reaction (2E)-decenoyl-[ACP] = (3Z)-decenoyl-[ACP]. It functions in the pathway lipid metabolism; fatty acid biosynthesis. Functionally, necessary for the introduction of cis unsaturation into fatty acids. Catalyzes the dehydration of (3R)-3-hydroxydecanoyl-ACP to E-(2)-decenoyl-ACP and then its isomerization to Z-(3)-decenoyl-ACP. Can catalyze the dehydratase reaction for beta-hydroxyacyl-ACPs with saturated chain lengths up to 16:0, being most active on intermediate chain length. This is 3-hydroxydecanoyl-[acyl-carrier-protein] dehydratase from Pseudomonas fluorescens (strain SBW25).